The primary structure comprises 216 residues: U1 small nuclear ribonucleoprotein C (216 aa).

The segment at 4–36 (FFCDYCDVYLTHDSMSVRKAHNAGRNHLRNVVE) adopts a Matrin-type zinc-finger fold. Composition is skewed to pro residues over residues 68-80 (AMAP…PPFG), 87-198 (QLPP…PAPP), and 206-216 (PGPPPGLSEKR). The segment at 68–216 (AMAPPGAFPP…GPPPGLSEKR (149 aa)) is disordered.

This sequence belongs to the U1 small nuclear ribonucleoprotein C family. U1 snRNP is composed of the 7 core Sm proteins B/B', D1, D2, D3, E, F and G that assemble in a heptameric protein ring on the Sm site of the small nuclear RNA to form the core snRNP, and at least 3 U1 snRNP-specific proteins U1-70K, U1-A and U1-C. U1-C interacts with U1 snRNA and the 5' splice-site region of the pre-mRNA.

It localises to the nucleus. In terms of biological role, component of the spliceosomal U1 snRNP, which is essential for recognition of the pre-mRNA 5' splice-site and the subsequent assembly of the spliceosome. U1-C is directly involved in initial 5' splice-site recognition for both constitutive and regulated alternative splicing. The interaction with the 5' splice-site seems to precede base-pairing between the pre-mRNA and the U1 snRNA. Stimulates commitment or early (E) complex formation by stabilizing the base pairing of the 5' end of the U1 snRNA and the 5' splice-site region. The polypeptide is U1 small nuclear ribonucleoprotein C (Aspergillus fumigatus (strain ATCC MYA-4609 / CBS 101355 / FGSC A1100 / Af293) (Neosartorya fumigata)).